Reading from the N-terminus, the 749-residue chain is Homeobox-leucine zipper protein ROC7 (749 aa).

The disordered stretch occupies residues 26 to 98 (LDQHQQHQHQ…KKRYHRHTQH (73 aa)). Residues 46 to 57 (SDGRAPRDELEM) are compositionally biased toward basic and acidic residues. Residues 68–79 (SGGGGGGGGSGG) are compositionally biased toward gly residues. Residues 86-97 (RPRKKRYHRHTQ) show a composition bias toward basic residues. The segment at residues 88–147 (RKKRYHRHTQHQIQELEAFFKECPHPDDKQRKELSRELGLEPLQVKFWFQNKRTQMKTQH) is a DNA-binding region (homeobox). Residues 137–218 (QNKRTQMKTQ…DRISAIAAKY (82 aa)) adopt a coiled-coil conformation. Residues 256-494 (ADFDKPLVIE…LERQCERLAS (239 aa)) enclose the START domain.

The protein belongs to the HD-ZIP homeobox family. Class IV subfamily.

The protein resides in the nucleus. In terms of biological role, probable transcription factor. This chain is Homeobox-leucine zipper protein ROC7 (ROC7), found in Oryza sativa subsp. japonica (Rice).